A 37-amino-acid polypeptide reads, in one-letter code: Brevinin-2DYe (37 aa).

Residues Cys-31 and Cys-37 are joined by a disulfide bond.

In terms of tissue distribution, expressed by the skin glands.

It is found in the secreted. Its function is as follows. Antimicrobial peptide. Active against the Gram-positive bacterium S.aureus (MIC=15 uM) and the Gram-negative bacterium E.coli (MIC=30 uM). The sequence is that of Brevinin-2DYe from Rana dybowskii (Dybovsky's frog).